The primary structure comprises 252 residues: tRNA (guanine-N(1)-)-methyltransferase (252 aa).

S-adenosyl-L-methionine-binding positions include G118 and 138–143 (IGDYVL).

This sequence belongs to the RNA methyltransferase TrmD family. In terms of assembly, homodimer.

The protein resides in the cytoplasm. It catalyses the reaction guanosine(37) in tRNA + S-adenosyl-L-methionine = N(1)-methylguanosine(37) in tRNA + S-adenosyl-L-homocysteine + H(+). Specifically methylates guanosine-37 in various tRNAs. The protein is tRNA (guanine-N(1)-)-methyltransferase of Pseudomonas aeruginosa (strain UCBPP-PA14).